Here is a 96-residue protein sequence, read N- to C-terminus: Aspartyl/glutamyl-tRNA(Asn/Gln) amidotransferase subunit C (96 aa).

Belongs to the GatC family. Heterotrimer of A, B and C subunits.

The enzyme catalyses L-glutamyl-tRNA(Gln) + L-glutamine + ATP + H2O = L-glutaminyl-tRNA(Gln) + L-glutamate + ADP + phosphate + H(+). The catalysed reaction is L-aspartyl-tRNA(Asn) + L-glutamine + ATP + H2O = L-asparaginyl-tRNA(Asn) + L-glutamate + ADP + phosphate + 2 H(+). In terms of biological role, allows the formation of correctly charged Asn-tRNA(Asn) or Gln-tRNA(Gln) through the transamidation of misacylated Asp-tRNA(Asn) or Glu-tRNA(Gln) in organisms which lack either or both of asparaginyl-tRNA or glutaminyl-tRNA synthetases. The reaction takes place in the presence of glutamine and ATP through an activated phospho-Asp-tRNA(Asn) or phospho-Glu-tRNA(Gln). The chain is Aspartyl/glutamyl-tRNA(Asn/Gln) amidotransferase subunit C from Bacillus anthracis (strain A0248).